A 415-amino-acid polypeptide reads, in one-letter code: MNSFLKELQEKNLIQDISNIEKIENSLKNKMGIYVGFDPSAKSIHLGNFVVINVLLIAKKHRIPTVALIGGATGGIGDPSGKKSERILIDEDTLKKNTEAIKKQIKHFLPDAKIVNNSDFYKNQSFIDFLRDVGKFIQVSYMLSKEIVKNRLESGISFTEFAYSLIQANDFHYLFKNHNVGIQFGGSDQWGNITTGLELIRKRNGENSFSGGFTIKLLLKSDGTKFGKSEQGAIYLDPSLTSPYTMYQFLLNQNDSDLLNLFNFISDLGIKEILEIITKHSENPEKRYGQKMLANNIVNRIHGKNALNEVENISNILFKNGKINDLSKSEVSIIINSFEVNHVNFSNDEKIIDILDRAKIFKSKNEIRKLIEQKGLVVGAEIITDFDQILKDSNLTHGVIFARQGKKKIFIIKKS.

Residue Tyr-34 participates in L-tyrosine binding. The 'HIGH' region motif lies at 39 to 48 (PSAKSIHLGN). Positions 163 and 167 each coordinate L-tyrosine. Positions 225–229 (KFGKS) match the 'KMSKS' region motif. Lys-228 serves as a coordination point for ATP. The region spanning 349–414 (EKIIDILDRA…GKKKIFIIKK (66 aa)) is the S4 RNA-binding domain.

It belongs to the class-I aminoacyl-tRNA synthetase family. TyrS type 1 subfamily. Homodimer.

The protein localises to the cytoplasm. It carries out the reaction tRNA(Tyr) + L-tyrosine + ATP = L-tyrosyl-tRNA(Tyr) + AMP + diphosphate + H(+). Catalyzes the attachment of tyrosine to tRNA(Tyr) in a two-step reaction: tyrosine is first activated by ATP to form Tyr-AMP and then transferred to the acceptor end of tRNA(Tyr). The sequence is that of Tyrosine--tRNA ligase from Mycoplasma mobile (strain ATCC 43663 / 163K / NCTC 11711) (Mesomycoplasma mobile).